The following is a 931-amino-acid chain: Bifunctional glutamine synthetase adenylyltransferase/adenylyl-removing enzyme (931 aa).

The segment at 1–434 (MTLAPADLPA…STEFAALLAP (434 aa)) is adenylyl removase. An adenylyl transferase region spans residues 441-931 (PDALANYWRS…ACIAAELPFA (491 aa)).

The protein belongs to the GlnE family. It depends on Mg(2+) as a cofactor.

The catalysed reaction is [glutamine synthetase]-O(4)-(5'-adenylyl)-L-tyrosine + phosphate = [glutamine synthetase]-L-tyrosine + ADP. It carries out the reaction [glutamine synthetase]-L-tyrosine + ATP = [glutamine synthetase]-O(4)-(5'-adenylyl)-L-tyrosine + diphosphate. Involved in the regulation of glutamine synthetase GlnA, a key enzyme in the process to assimilate ammonia. When cellular nitrogen levels are high, the C-terminal adenylyl transferase (AT) inactivates GlnA by covalent transfer of an adenylyl group from ATP to specific tyrosine residue of GlnA, thus reducing its activity. Conversely, when nitrogen levels are low, the N-terminal adenylyl removase (AR) activates GlnA by removing the adenylyl group by phosphorolysis, increasing its activity. The regulatory region of GlnE binds the signal transduction protein PII (GlnB) which indicates the nitrogen status of the cell. This is Bifunctional glutamine synthetase adenylyltransferase/adenylyl-removing enzyme from Stenotrophomonas maltophilia (strain R551-3).